Consider the following 253-residue polypeptide: Phosphoglycerate mutase 2 (253 aa).

Threonine 3 carries the phosphothreonine modification. Substrate-binding positions include 10-17, 23-24, arginine 62, 89-92, lysine 100, and 116-117; these read RHGESSWN, CG, ERHY, and RR. The active-site Tele-phosphohistidine intermediate is the histidine 11. Residues serine 14 and serine 15 each carry the phosphoserine modification. Glutamate 89 serves as the catalytic Proton donor/acceptor. The residue at position 118 (serine 118) is a Phosphoserine. A Phosphothreonine modification is found at threonine 121. A phosphotyrosine mark is found at tyrosine 132 and tyrosine 133. Serine 135 carries the post-translational modification Phosphoserine. Threonine 152 bears the Phosphothreonine mark. 187–188 contacts substrate; it reads GN.

It belongs to the phosphoglycerate mutase family. BPG-dependent PGAM subfamily. As to quaternary structure, homodimer. Interacts with ENO1.

It catalyses the reaction (2R)-2-phosphoglycerate = (2R)-3-phosphoglycerate. It carries out the reaction (2R)-3-phospho-glyceroyl phosphate = (2R)-2,3-bisphosphoglycerate + H(+). Interconversion of 3- and 2-phosphoglycerate with 2,3-bisphosphoglycerate as the primer of the reaction. Can also catalyze the reaction of EC 5.4.2.4 (synthase), but with a reduced activity. In Rattus norvegicus (Rat), this protein is Phosphoglycerate mutase 2 (Pgam2).